Reading from the N-terminus, the 293-residue chain is 4-hydroxy-tetrahydrodipicolinate synthase (293 aa).

Residue Thr45 coordinates pyruvate. The active-site Proton donor/acceptor is the Tyr133. The active-site Schiff-base intermediate with substrate is the Lys161. A pyruvate-binding site is contributed by Ile203.

Belongs to the DapA family. Homotetramer; dimer of dimers.

The protein resides in the cytoplasm. It catalyses the reaction L-aspartate 4-semialdehyde + pyruvate = (2S,4S)-4-hydroxy-2,3,4,5-tetrahydrodipicolinate + H2O + H(+). Its pathway is amino-acid biosynthesis; L-lysine biosynthesis via DAP pathway; (S)-tetrahydrodipicolinate from L-aspartate: step 3/4. In terms of biological role, catalyzes the condensation of (S)-aspartate-beta-semialdehyde [(S)-ASA] and pyruvate to 4-hydroxy-tetrahydrodipicolinate (HTPA). The sequence is that of 4-hydroxy-tetrahydrodipicolinate synthase from Shewanella piezotolerans (strain WP3 / JCM 13877).